We begin with the raw amino-acid sequence, 701 residues long: DNA ligase (701 aa).

NAD(+) contacts are provided by residues 43 to 47 (DAAYD), 92 to 93 (SL), and glutamate 126. Lysine 128 functions as the N6-AMP-lysine intermediate in the catalytic mechanism. NAD(+)-binding residues include arginine 149, glutamate 186, lysine 302, and lysine 326. Residues cysteine 420, cysteine 423, cysteine 444, and cysteine 450 each contribute to the Zn(2+) site. The 79-residue stretch at 623–701 (ANDSPVAGKT…EDEWFDLIGA (79 aa)) folds into the BRCT domain.

Belongs to the NAD-dependent DNA ligase family. LigA subfamily. Requires Mg(2+) as cofactor. Mn(2+) is required as a cofactor.

The enzyme catalyses NAD(+) + (deoxyribonucleotide)n-3'-hydroxyl + 5'-phospho-(deoxyribonucleotide)m = (deoxyribonucleotide)n+m + AMP + beta-nicotinamide D-nucleotide.. DNA ligase that catalyzes the formation of phosphodiester linkages between 5'-phosphoryl and 3'-hydroxyl groups in double-stranded DNA using NAD as a coenzyme and as the energy source for the reaction. It is essential for DNA replication and repair of damaged DNA. The protein is DNA ligase of Maricaulis maris (strain MCS10) (Caulobacter maris).